The primary structure comprises 185 residues: ATP synthase subunit delta (185 aa).

The protein belongs to the ATPase delta chain family. As to quaternary structure, F-type ATPases have 2 components, F(1) - the catalytic core - and F(0) - the membrane proton channel. F(1) has five subunits: alpha(3), beta(3), gamma(1), delta(1), epsilon(1). F(0) has three main subunits: a(1), b(2) and c(10-14). The alpha and beta chains form an alternating ring which encloses part of the gamma chain. F(1) is attached to F(0) by a central stalk formed by the gamma and epsilon chains, while a peripheral stalk is formed by the delta and b chains.

Its subcellular location is the cell inner membrane. Functionally, f(1)F(0) ATP synthase produces ATP from ADP in the presence of a proton or sodium gradient. F-type ATPases consist of two structural domains, F(1) containing the extramembraneous catalytic core and F(0) containing the membrane proton channel, linked together by a central stalk and a peripheral stalk. During catalysis, ATP synthesis in the catalytic domain of F(1) is coupled via a rotary mechanism of the central stalk subunits to proton translocation. This protein is part of the stalk that links CF(0) to CF(1). It either transmits conformational changes from CF(0) to CF(1) or is implicated in proton conduction. The polypeptide is ATP synthase subunit delta (Gemmatimonas aurantiaca (strain DSM 14586 / JCM 11422 / NBRC 100505 / T-27)).